We begin with the raw amino-acid sequence, 289 residues long: Protease HtpX (289 aa).

Helical transmembrane passes span 6–26 (ILFL…LNII) and 38–58 (TGIL…SLFM). Residue His144 coordinates Zn(2+). The active site involves Glu145. Position 148 (His148) interacts with Zn(2+). 2 helical membrane passes run 152–172 (GDMV…IFLS) and 194–214 (LVFW…ATMI). Residue Glu223 coordinates Zn(2+).

Belongs to the peptidase M48B family. The cofactor is Zn(2+).

It is found in the cell inner membrane. The chain is Protease HtpX from Haemophilus ducreyi (strain 35000HP / ATCC 700724).